Here is an 83-residue protein sequence, read N- to C-terminus: Exodeoxyribonuclease 7 small subunit (83 aa).

Residues Val-63–Arg-83 are disordered.

It belongs to the XseB family. As to quaternary structure, heterooligomer composed of large and small subunits.

It is found in the cytoplasm. It carries out the reaction Exonucleolytic cleavage in either 5'- to 3'- or 3'- to 5'-direction to yield nucleoside 5'-phosphates.. In terms of biological role, bidirectionally degrades single-stranded DNA into large acid-insoluble oligonucleotides, which are then degraded further into small acid-soluble oligonucleotides. In Gluconobacter oxydans (strain 621H) (Gluconobacter suboxydans), this protein is Exodeoxyribonuclease 7 small subunit.